Reading from the N-terminus, the 445-residue chain is Phosphoglucosamine mutase (445 aa).

S101 (phosphoserine intermediate) is an active-site residue. S101, D240, D242, and D244 together coordinate Mg(2+). Phosphoserine is present on S101.

It belongs to the phosphohexose mutase family. Mg(2+) is required as a cofactor. Post-translationally, activated by phosphorylation.

The catalysed reaction is alpha-D-glucosamine 1-phosphate = D-glucosamine 6-phosphate. Its function is as follows. Catalyzes the conversion of glucosamine-6-phosphate to glucosamine-1-phosphate. The chain is Phosphoglucosamine mutase from Azotobacter vinelandii (strain DJ / ATCC BAA-1303).